The sequence spans 323 residues: Peroxisomal and mitochondrial division factor 2 (323 aa).

Disordered stretches follow at residues 1-55 (MAEE…NDAI), 73-92 (ESKA…KSDE), and 120-143 (TART…SQKG). Over 1–297 (MAEERSLNGE…WSPNVTAVGS (297 aa)) the chain is Cytoplasmic. The span at 13–26 (GQDDESFFDSDQQG) shows a compositional bias: acidic residues. A coiled-coil region spans residues 28 to 278 (DGKSTELNQK…INGLKNVVEE (251 aa)). The helical transmembrane segment at 298 to 318 (GGAVAAVAVAVAGAAVVCYIY) threads the bilayer. Residues 319 to 323 (HSRRV) are Mitochondrial intermembrane-facing.

As to quaternary structure, homodimer. Interacts with PMD1.

Its subcellular location is the mitochondrion outer membrane. In terms of biological role, involved in morphogenesis and proliferation of mitochondria. Does not act redundantly with PMD1. Is not involved in peroxisomal proliferation. This Arabidopsis thaliana (Mouse-ear cress) protein is Peroxisomal and mitochondrial division factor 2.